We begin with the raw amino-acid sequence, 132 residues long: MSNKFLGTWKLVSSEHFDDYMKALGVGLANRKLGNLAKPTVIISKKGDYITIRTESAFKNTEISFKLGQEFDETTADNRKAKSIVTLERGSLKQVQKWDGKETAIRRTLLDGRMVVECIMKGVVCTRIYEKV.

Serine 2 carries the N-acetylserine modification. (9Z)-octadecenoate contacts are provided by residues arginine 107 and 127 to 129 (RIY). Residues arginine 107 and 127 to 129 (RIY) contribute to the hexadecanoate site.

Belongs to the calycin superfamily. Fatty-acid binding protein (FABP) family. In terms of assembly, monomer.

It localises to the cytoplasm. Functionally, may play a role in lipid transport protein in Schwann cells. May bind cholesterol. The polypeptide is Myelin P2 protein (Pmp2) (Mus musculus (Mouse)).